A 3574-amino-acid chain; its full sequence is Chromatin structure-remodeling complex protein SYD (3574 aa).

3 disordered regions span residues 76 to 105 (SCLPHPGGTQTEDSGSAHLAGSSQAVGVSN), 123 to 211 (TSGR…KIDD), and 328 to 372 (DPKG…TERS). Polar residues-rich tracts occupy residues 124–148 (SGRQLGGSNSASQTFYQGSGTQSNR) and 155–168 (PSNLDSTSGISQPH). The span at 169 to 181 (NRSETMNQRDVKS) shows a compositional bias: basic and acidic residues. Residues 194 to 204 (WDQNMDNSQIF) show a composition bias toward polar residues. Residues 358-372 (RLDEMDFSSKETERS) show a composition bias toward basic and acidic residues. One can recognise an HSA domain in the interval 573–647 (QKMKEERQRR…QREKINLLKI (75 aa)). Residues 766 to 933 (VSLYNNHLNG…WALLNFLLPN (168 aa)) enclose the Helicase ATP-binding domain. 779–786 (DEMGLGKT) contacts ATP. The DEAH box signature appears at 884–887 (DEGH). The Helicase C-terminal domain occupies 1077–1223 (MLDRMLPKLK…KLGVANQSIT (147 aa)). The Nuclear localization signal signature appears at 1266–1273 (ARRESEID). 19 disordered regions span residues 1342 to 1472 (KRKD…VSRT), 1500 to 1575 (HPTS…SDAE), 1588 to 1637 (IVSR…SGSH), 1690 to 1811 (GPVQ…QIEV), 1830 to 1868 (QPHFSQSVAPDIHSSGSLSQEIRRDTSGTGGSARKQTAD), 2040 to 2068 (SSLSYVRSEPTASASTTAEPLPTDKLEKN), 2089 to 2115 (SSEEQTNVNSKIETNSEELQASRTDEV), 2143 to 2162 (SSMLEPDELPNAGQKGHSSI), 2179 to 2220 (LDDK…QMED), 2235 to 2338 (EEKE…DTND), 2350 to 2451 (EEKE…HMED), 2517 to 2538 (FESETHARTDSGGIDRGNEVSE), 2684 to 2703 (SEEIQSPSILPDDVPGQPDD), 2718 to 2759 (IDIG…RDSR), 2865 to 2884 (DTEKSKEPGTESADVSLHQL), 3017 to 3045 (EGTDFSSSLPKTEEENAKSQLADTEPSSS), 3189 to 3208 (NADSQLANIEPSSSPSVVEK), 3316 to 3337 (VDDSTGCSSEPQVQLPPSAEPM), and 3512 to 3574 (TEDT…NEDV). Residues 1362–1371 (AREVRSYEEK) are compositionally biased toward basic and acidic residues. Composition is skewed to polar residues over residues 1399–1426 (SLANDTSNIPVENSSDTLLPTSPTQAIT) and 1500–1511 (HPTSSLALTSPD). Positions 1532-1546 (GRGRGRSRGRGAGRG) are enriched in basic residues. Polar residues-rich tracts occupy residues 1555-1571 (GSNSSITQRTETATSLA) and 1597-1614 (EGSTSNPDQVSPVHSATT). Basic and acidic residues predominate over residues 1617–1627 (RSDKAADKDLD). Polar residues-rich tracts occupy residues 1690 to 1699 (GPVQNQNAVS), 1706 to 1752 (KSPS…STVE), 1796 to 1806 (DASSARSTGLT), 1832 to 1849 (HFSQSVAPDIHSSGSLSQ), 2040 to 2057 (SSLSYVRSEPTASASTTA), and 2090 to 2110 (SEEQTNVNSKIETNSEELQAS). Residues 2248-2260 (DDADTEQDPEESV) are compositionally biased toward acidic residues. Residues 2438–2451 (DRPKDGTADTHMED) are compositionally biased toward basic and acidic residues. The span at 2718–2735 (IDIGITSGKTCQPSSSTQ) shows a compositional bias: polar residues. Composition is skewed to polar residues over residues 3034–3045 (KSQLADTEPSSS) and 3191–3204 (DSQLANIEPSSSPS). The segment covering 3523-3538 (KTEEKDAENPSDRLDG) has biased composition (basic and acidic residues).

It belongs to the SNF2/RAD54 helicase family. As to quaternary structure, interacts with LFY. Binds to BARD1/ROW1. In terms of processing, phosphorylated. As to expression, mostly expressed in rapidly dividing cells in the vegetative, inflorescence, and root meristems, as well as in young leaf and flower primordia. Isoform 1 is predominantly found in seedlings whereas isoform 2 is present in both seedlings and inflorescences (at protein level).

It localises to the cytoplasm. Its subcellular location is the nucleus. In terms of biological role, catalytic component of the chromatin structure-remodeling complex (RSC), which is involved in transcription regulation and nucleosome positioning. Controls stem cell fate via the transcription regulation of WUS in the shoot apical meristem, by modulating its promoter. LFY-dependent repressor of the meristem identity switch from vegetative to reproductive development probably by modulating chromatin state. Involved in the regulation of floral homeotic gene expression in response to environmental stimuli. Required for carpel and ovule development, and for cotyledon separation via the regulation of CUC2 transcription. Regulates the promoters of several genes downstream of the jasmonate (JA) and ethylene (ET) signaling pathways. Required for resistance against the necrotrophic pathogen B.cinerea but not the biotrophic pathogen P.syringae. This is Chromatin structure-remodeling complex protein SYD (SYD) from Arabidopsis thaliana (Mouse-ear cress).